The chain runs to 159 residues: Protein Smg homolog (159 aa).

It belongs to the Smg family.

The polypeptide is Protein Smg homolog (Nitrosococcus oceani (strain ATCC 19707 / BCRC 17464 / JCM 30415 / NCIMB 11848 / C-107)).